Here is a 222-residue protein sequence, read N- to C-terminus: Large ribosomal subunit protein uL4 (222 aa).

The interval 42 to 100 (AAGRQGTHSTKTRGEVRGGGKKPYRQKGTGRARQGSVRAPQFTGGGTVHGPKPRDYAQR) is disordered. Basic residues predominate over residues 60-71 (GGKKPYRQKGTG).

This sequence belongs to the universal ribosomal protein uL4 family. Part of the 50S ribosomal subunit.

One of the primary rRNA binding proteins, this protein initially binds near the 5'-end of the 23S rRNA. It is important during the early stages of 50S assembly. It makes multiple contacts with different domains of the 23S rRNA in the assembled 50S subunit and ribosome. Its function is as follows. Forms part of the polypeptide exit tunnel. The protein is Large ribosomal subunit protein uL4 of Thermobifida fusca (strain YX).